The chain runs to 98 residues: uncharacterized protein (98 aa).

The protein belongs to the CFAP97 family. In terms of tissue distribution, expressed in a number of tissues including brain, thymus, lung, heart, liver, spleen, kidney and testis.

This is an uncharacterized protein from Mus musculus (Mouse).